The chain runs to 62 residues: Small EDRK-rich factor 1 (62 aa).

Composition is skewed to basic and acidic residues over residues 1 to 30 (MARGNQRELARQKNMKKSQEISKGKRKEDS) and 50 to 62 (AANERKSMQTREK). The disordered stretch occupies residues 1–62 (MARGNQRELA…ERKSMQTREK (62 aa)).

The protein belongs to the SERF family. In terms of assembly, interacts with SNCA; this interaction promotes the aggregation of SNCA.

Its subcellular location is the cytoplasm. It is found in the cytosol. The protein resides in the nucleus. Its function is as follows. Positive regulator of amyloid protein aggregation and proteotoxicity. Induces conformational changes in amyloid proteins, such as APP, HTT, and SNCA, driving them into compact formations preceding the formation of aggregates. The sequence is that of Small EDRK-rich factor 1 (SERF1) from Bos taurus (Bovine).